A 218-amino-acid chain; its full sequence is GTP cyclohydrolase 1 (218 aa).

Residues cysteine 109, histidine 112, and cysteine 180 each coordinate Zn(2+).

Belongs to the GTP cyclohydrolase I family. As to quaternary structure, toroid-shaped homodecamer, composed of two pentamers of five dimers.

The catalysed reaction is GTP + H2O = 7,8-dihydroneopterin 3'-triphosphate + formate + H(+). The protein operates within cofactor biosynthesis; 7,8-dihydroneopterin triphosphate biosynthesis; 7,8-dihydroneopterin triphosphate from GTP: step 1/1. The polypeptide is GTP cyclohydrolase 1 (Actinobacillus pleuropneumoniae serotype 5b (strain L20)).